The following is a 1146-amino-acid chain: Integrin alpha-PS1 (1146 aa).

The signal sequence occupies residues 1-30 (MLELPFTTIRPNCRLRQNLGILIILQCVLT). Residues 31–1085 (CYNFNLEQRL…NQQRDTSIPW (1055 aa)) lie on the Extracellular side of the membrane. FG-GAP repeat units follow at residues 38–105 (QRLP…FDDC), 121–186 (LSPP…FEEV), 193–245 (RPVQ…YLQR), 254–303 (HSDL…KSTD), 304–366 (NPIP…TLPM), 367–422 (KYTL…GLNS), and 432–494 (ELGG…RKEL). Residues asparagine 68, asparagine 86, and asparagine 147 are each glycosylated (N-linked (GlcNAc...) asparagine). N-linked (GlcNAc...) asparagine glycosylation is found at asparagine 470, asparagine 511, asparagine 657, asparagine 680, asparagine 711, asparagine 718, asparagine 761, and asparagine 928. The tract at residues 938 to 958 (YYSSSHRDDHSDDTQSNRNRV) is disordered. The segment covering 942 to 952 (SHRDDHSDDTQ) has biased composition (basic and acidic residues). Asparagine 1027 is a glycosylation site (N-linked (GlcNAc...) asparagine). Residues 1086–1106 (LIIILGIVGGLLLLALVTYVL) traverse the membrane as a helical segment. Residues 1107–1146 (WKVGFFKRIRPTDPTLSGNLEKMNEEKPFLAPSKNTHHVF) lie on the Cytoplasmic side of the membrane.

The protein belongs to the integrin alpha chain family. Heterodimer of an alpha and a beta subunit. The alpha subunit is composed of a heavy and a light chain linked by a disulfide bond. Alpha-PS1 associates with beta-PS. As to expression, expressed in follicle cells (at protein level). At syncytial blastoderm stage, expressed in the ectoderm but not in the mesodermal precursors. At embryonic stage 7, expressed in dorsal and ventrolateral ectoderm and in some yolk nuclei. At late stage 10, expression is homogeneous in the ectoderm and is particularly abundant in the anterior and posterior midgut primordia. At stage 11, strongly expressed in a metameric pattern in the ectoderm, in the proctodeum and in the posterior midgut primordium. At stage 12, accumulates at the segment boundaries that start to become morphologically visible, similar expression pattern is observed in the central nervous system. In third larval instar wing imaginal disk, strongly expressed in the dorsal compartment, in the adepithelial cells and in patches on the peripodial membrane covering the imaginal disk to the outside.

Its subcellular location is the apical cell membrane. It localises to the lateral cell membrane. The protein localises to the basal cell membrane. In terms of biological role, integrin alpha-PS1/beta-PS is a receptor for laminin. The protein is Integrin alpha-PS1 (mew) of Drosophila melanogaster (Fruit fly).